The chain runs to 230 residues: NAD(P)H-hydrate epimerase (230 aa).

One can recognise a YjeF N-terminal domain in the interval 11–218; that stretch reads AIDVDQELFT…ALQRKYELNL (208 aa). (6S)-NADPHX is bound at residue 61–65; it reads NNGGD. Residues asparagine 62 and aspartate 126 each contribute to the K(+) site. (6S)-NADPHX is bound by residues 130-136 and aspartate 159; that span reads GFSFKPP. Serine 162 contributes to the K(+) binding site.

This sequence belongs to the NnrE/AIBP family. K(+) is required as a cofactor.

It catalyses the reaction (6R)-NADHX = (6S)-NADHX. It carries out the reaction (6R)-NADPHX = (6S)-NADPHX. Catalyzes the epimerization of the S- and R-forms of NAD(P)HX, a damaged form of NAD(P)H that is a result of enzymatic or heat-dependent hydration. This is a prerequisite for the S-specific NAD(P)H-hydrate dehydratase to allow the repair of both epimers of NAD(P)HX. The polypeptide is NAD(P)H-hydrate epimerase (Drosophila erecta (Fruit fly)).